Here is a 570-residue protein sequence, read N- to C-terminus: Methionine--tRNA ligase (570 aa).

The 'HIGH' region motif lies at 11 to 21; it reads PYVQTVPHLGN. Zn(2+) is bound by residues C143, C146, C156, and C159. The 'KMSKS' region signature appears at 333 to 337; that stretch reads KFSKS. K336 provides a ligand contact to ATP.

Belongs to the class-I aminoacyl-tRNA synthetase family. MetG type 1 subfamily. Requires Zn(2+) as cofactor.

The protein localises to the cytoplasm. The enzyme catalyses tRNA(Met) + L-methionine + ATP = L-methionyl-tRNA(Met) + AMP + diphosphate. In terms of biological role, is required not only for elongation of protein synthesis but also for the initiation of all mRNA translation through initiator tRNA(fMet) aminoacylation. The polypeptide is Methionine--tRNA ligase (Pyrobaculum arsenaticum (strain DSM 13514 / JCM 11321 / PZ6)).